A 113-amino-acid polypeptide reads, in one-letter code: Ribulose bisphosphate carboxylase small subunit (113 aa).

This sequence belongs to the RuBisCO small chain family. As to quaternary structure, heterohexadecamer of 8 large and 8 small subunits. Forms a CsoS2-CsoS1-RuBisCO complex.

It is found in the carboxysome. Functionally, ruBisCO catalyzes two reactions: the carboxylation of D-ribulose 1,5-bisphosphate, the primary event in carbon dioxide fixation, as well as the oxidative fragmentation of the pentose substrate in the photorespiration process. Both reactions occur simultaneously and in competition at the same active site. Although the small subunit is not catalytic it is essential for maximal activity. This chain is Ribulose bisphosphate carboxylase small subunit, found in Prochlorococcus marinus (strain MIT 9313).